Consider the following 2388-residue polypeptide: CCR4-NOT transcription complex subunit 1 (2388 aa).

4 short sequence motifs (LXXLL) span residues 153-157 (LPDLL), 181-185 (LHLLL), 223-227 (LAPLL), and 570-574 (LSMLL). Disordered stretches follow at residues 1012 to 1035 (SQAQ…TTPA) and 1300 to 1320 (EQLS…PMTS). Low complexity predominate over residues 1016 to 1035 (TPAKPASSSAVTTPTTTTPA). The segment at 1076-1617 (EPPENVQEKI…QPMKQQAWAT (542 aa)) is interaction with CCR4-NOT complex catalytic subunits. Positions 1300-1313 (EQLSAPKKDVKQPE) are enriched in basic and acidic residues. 3 consecutive short sequence motifs (LXXLL) follow at residues 1651 to 1655 (LRSLL), 1954 to 1958 (LIALL), and 2108 to 2112 (LRVLL).

The protein belongs to the CNOT1 family. Component of the CCR4-NOT complex.

It is found in the cytoplasm. Its subcellular location is the nucleus. Its function is as follows. Scaffolding component of the CCR4-NOT complex which is one of the major cellular mRNA deadenylases and is linked to various cellular processes including bulk mRNA degradation, miRNA-mediated repression, translational repression during translational initiation and general transcription regulation. Additional complex functions may be a consequence of its influence on mRNA expression. Its scaffolding function implies its interaction with the catalytic complex module and diverse RNA-binding proteins mediating the complex recruitment to selected mRNA 3'UTRs. Acts as a transcriptional repressor. Represses the ligand-dependent transcriptional activation by nuclear receptors. The sequence is that of CCR4-NOT transcription complex subunit 1 (cnot1) from Xenopus tropicalis (Western clawed frog).